A 316-amino-acid polypeptide reads, in one-letter code: Apolipoprotein E (316 aa).

Residues 1-18 (MKVLWVALVVALLAGCQA) form the signal peptide. 8 tandem repeats follow at residues 79-100 (VLME…GQLA), 101-122 (PMAQ…ARLG), 123-144 (SDME…AMLG), 145-166 (QSTE…KRLL), 167-188 (RDAD…EGAE), 189-210 (RSVS…SRAA), 211-232 (TLST…QKLH), and 233-254 (GRLE…QQLE). The segment at 79–254 (VLMEETMKEV…RLDKMRQQLE (176 aa)) is 8 X 22 AA approximate tandem repeats. Met-142 carries the post-translational modification Methionine sulfoxide. At Ser-146 the chain carries Phosphoserine. The tract at residues 157–167 (HLRKLRKRLLR) is LDL and other lipoprotein receptors binding. 161 to 164 (LRKR) serves as a coordination point for heparin. Positions 209–289 (AATLSTQAAQ…SWFEPLVGDM (81 aa)) are lipid-binding and lipoprotein association. Thr-211 carries O-linked (GalNAc...) threonine glycosylation. Residue 228–235 (RQKLHGRL) coordinates heparin. Residues 265–316 (SQIRLQAEAFQARLRSWFEPLVGDMQRQWAGLVEKVQLALHLSPTSPPSENH) form a homooligomerization region. A specificity for association with VLDL region spans residues 277–289 (RLRSWFEPLVGDM).

It belongs to the apolipoprotein A1/A4/E family. Homotetramer. May interact with ABCA1; functionally associated with ABCA1 in the biogenesis of HDLs. May interact with APP/A4 amyloid-beta peptide; the interaction is extremely stable in vitro but its physiological significance is unclear. May interact with MAPT. May interact with MAP2. In the cerebrospinal fluid, interacts with secreted SORL1. Interacts with PMEL; this allows the loading of PMEL luminal fragment on ILVs to induce fibril nucleation. In terms of processing, APOE exists as multiple glycosylated and sialylated glycoforms within cells and in plasma. The extent of glycosylation and sialylation are tissue and context specific. Glycated in plasma VLDL. Post-translationally, phosphorylated by FAM20C in the extracellular medium.

Its subcellular location is the secreted. The protein resides in the extracellular space. The protein localises to the extracellular matrix. It localises to the extracellular vesicle. It is found in the endosome. Its subcellular location is the multivesicular body. APOE is an apolipoprotein, a protein associating with lipid particles, that mainly functions in lipoprotein-mediated lipid transport between organs via the plasma and interstitial fluids. APOE is a core component of plasma lipoproteins and is involved in their production, conversion and clearance. Apolipoproteins are amphipathic molecules that interact both with lipids of the lipoprotein particle core and the aqueous environment of the plasma. As such, APOE associates with chylomicrons, chylomicron remnants, very low density lipoproteins (VLDL) and intermediate density lipoproteins (IDL) but shows a preferential binding to high-density lipoproteins (HDL). It also binds a wide range of cellular receptors including the LDL receptor/LDLR and the very low-density lipoprotein receptor/VLDLR that mediate the cellular uptake of the APOE-containing lipoprotein particles. Finally, APOE also has a heparin-binding activity and binds heparan-sulfate proteoglycans on the surface of cells, a property that supports the capture and the receptor-mediated uptake of APOE-containing lipoproteins by cells. This Capra hircus aegagrus (Wild goat) protein is Apolipoprotein E (APOE).